A 521-amino-acid polypeptide reads, in one-letter code: MVLMILPFVGPVSVSESLVAIITMCLVYMILKFFRTEIPEGLCQLPGPKPLPIIGNVLEVGRNPYLSLTAMSKRYGDVFQIQIGMRPVVVLSGSETVRQALIKQGDDFAGRPDLYSFRFINDGKSLAFSTDQAGVWRARRKLAYSALRSFSTLEGTTPEYSCALEEHVSKEAEYLVKQLNTVMETDGSFDPFRHIVVSVANVICGMCFGRRYDHNNQELLNLVNLSDEFGQVVASGNPADFIPILQYLPSTSMKKFVSINDRFNAFVQKIVSEHYTTFDKDNIRDITDSLIDHCEDRKLDENSNVQMSDEKVVGIVNDLFGAGFDTISTALSWSVMYLVAYPEIQERLYQEMKESVGLDRTPCLSDKPKLPFLEAFILEIFRHSSFLPFTIPHCSSKDTSLNGYFIPKDTCVFINQWQINHDPELWKDPSSFNPDRFLNTDGTELNKLEGEKMMVFGLGKRRCIGEVIARNEVFLFLAILVQNLRFHAKPGEPLDMTPEYGLTMKHKRCHLRAAMRSRNEE.

Phe229 serves as a coordination point for substrate. Heme is bound at residue Cys463.

Belongs to the cytochrome P450 family. Heme is required as a cofactor.

The protein localises to the endoplasmic reticulum membrane. Its subcellular location is the microsome membrane. It catalyses the reaction an organic molecule + reduced [NADPH--hemoprotein reductase] + O2 = an alcohol + oxidized [NADPH--hemoprotein reductase] + H2O + H(+). Cytochromes P450 are a group of heme-thiolate monooxygenases. They oxidize a variety of structurally unrelated compounds, including steroids, fatty acids, and xenobiotics. The polypeptide is Cytochrome P450 1A1 (cyp1a1) (Sparus aurata (Gilthead sea bream)).